We begin with the raw amino-acid sequence, 419 residues long: S-adenosylmethionine synthase (419 aa).

H14 provides a ligand contact to ATP. Residue D16 coordinates Mg(2+). E42 provides a ligand contact to K(+). The L-methionine site is built by E55 and Q98. Positions 98 to 108 (QSQDIYQGVDR) are flexible loop. Residues 164–166 (DSK), 242–243 (KF), D251, 257–258 (RK), A274, and K278 contribute to the ATP site. D251 is an L-methionine binding site. L-methionine is bound at residue K282.

It belongs to the AdoMet synthase family. In terms of assembly, homotetramer; dimer of dimers. Mg(2+) is required as a cofactor. It depends on K(+) as a cofactor.

It is found in the cytoplasm. The enzyme catalyses L-methionine + ATP + H2O = S-adenosyl-L-methionine + phosphate + diphosphate. It participates in amino-acid biosynthesis; S-adenosyl-L-methionine biosynthesis; S-adenosyl-L-methionine from L-methionine: step 1/1. Catalyzes the formation of S-adenosylmethionine (AdoMet) from methionine and ATP. The overall synthetic reaction is composed of two sequential steps, AdoMet formation and the subsequent tripolyphosphate hydrolysis which occurs prior to release of AdoMet from the enzyme. This chain is S-adenosylmethionine synthase, found in Christiangramia forsetii (strain DSM 17595 / CGMCC 1.15422 / KT0803) (Gramella forsetii).